Reading from the N-terminus, the 201-residue chain is MSGGGDVNMSGGDRRKGTVKWFDTQKGFGFITPSDGGDDLFVHQSSIRSEGFRSLAAEESVEFDVEVDNSGRPKAIEVSGPDGAPVQGNSGGGGSSGGRGGFGGGGGRGGGRGGGSYGGGYGGRGSGGRGGGGGDNSCFKCGEPGHMARECSQGGGGYSGGGGGGRYGSGGGGGGGGGGLSCYSCGESGHFARDCTSGGAR.

Ser2 is modified (N-acetylserine). Residues 14 to 81 (RRKGTVKWFD…RPKAIEVSGP (68 aa)) form the CSD domain. The tract at residues 66-109 (EVDNSGRPKAIEVSGPDGAPVQGNSGGGGSSGGRGGFGGGGGRG) is disordered. The segment covering 89 to 109 (NSGGGGSSGGRGGFGGGGGRG) has biased composition (gly residues). CCHC-type zinc fingers lie at residues 136-153 (NSCF…ECSQ) and 180-197 (LSCY…DCTS).

This sequence belongs to the cold shock protein (CSP) family. Mostly expressed in shoot apices and siliques, and, to a lower extent, in roots, cotyledons, stems, shoots, leaves, floral buds and flowers. Present in shoot apical meristems and siliques (at protein level). Very low levels are observed in cv. Landsberg erecta compared to cv. Columbia.

Its subcellular location is the cytoplasm. It localises to the nucleus. It is found in the nucleolus. In terms of biological role, chaperone that binds to and unwinds RNA and both single-stranded DNA and double-stranded DNA (ssDNA and dsDNA DNA). Regulates the flowering transition and flower and seed development, particularly at late stages of embryo development, through regulation of gene expression (including MEA, FIS2, AP1, CAL, AG and SHP2). The polypeptide is Cold shock domain-containing protein 4 (CSP4) (Arabidopsis thaliana (Mouse-ear cress)).